We begin with the raw amino-acid sequence, 245 residues long: 1-(5-phosphoribosyl)-5-[(5-phosphoribosylamino)methylideneamino] imidazole-4-carboxamide isomerase (245 aa).

The Proton acceptor role is filled by Asp-8. The Proton donor role is filled by Asp-130.

This sequence belongs to the HisA/HisF family.

Its subcellular location is the cytoplasm. The enzyme catalyses 1-(5-phospho-beta-D-ribosyl)-5-[(5-phospho-beta-D-ribosylamino)methylideneamino]imidazole-4-carboxamide = 5-[(5-phospho-1-deoxy-D-ribulos-1-ylimino)methylamino]-1-(5-phospho-beta-D-ribosyl)imidazole-4-carboxamide. It functions in the pathway amino-acid biosynthesis; L-histidine biosynthesis; L-histidine from 5-phospho-alpha-D-ribose 1-diphosphate: step 4/9. The polypeptide is 1-(5-phosphoribosyl)-5-[(5-phosphoribosylamino)methylideneamino] imidazole-4-carboxamide isomerase (Teredinibacter turnerae (strain ATCC 39867 / T7901)).